The following is a 584-amino-acid chain: Endoribonuclease YBEY, chloroplastic (584 aa).

Residues 1-50 (MLSRVCPTLRYNRIWSAHAREMPRATLLLLQPNFFHSSPKTALVNRLDVT) constitute a chloroplast transit peptide. The Zn(2+) site is built by His-240, His-244, and His-250.

It belongs to the endoribonuclease YbeY family. Zn(2+) serves as cofactor.

The protein resides in the plastid. Its subcellular location is the chloroplast stroma. Endoribonuclease required for chloroplast ribosomal RNA (rRNA) processing and essential for normal growth and development. May be involved in maturation of both the 5' and 3' ends of 16S, 23S, and 4.5S rRNAs. Cleaves chloroplast rRNAs, mRNAs and tRNAs in vitro. The chain is Endoribonuclease YBEY, chloroplastic from Arabidopsis thaliana (Mouse-ear cress).